The sequence spans 237 residues: Coat protein (237 aa).

The interval 1 to 24 is disordered; it reads MSAPASTTQPIGSTTSTTTKTAGA.

It belongs to the potexvirus capsid protein family.

It is found in the virion. Required for genome encapsidation. Forms ribonucleoprotein complexes along with TGB1 helicase and viral RNA. The chain is Coat protein from Potato virus X (strain UK3) (PVX).